Consider the following 858-residue polypeptide: DNA mismatch repair protein MutS (858 aa).

ATP is bound at residue Gly613–Ser620.

The protein belongs to the DNA mismatch repair MutS family.

This protein is involved in the repair of mismatches in DNA. It is possible that it carries out the mismatch recognition step. This protein has a weak ATPase activity. This chain is DNA mismatch repair protein MutS, found in Dehalococcoides mccartyi (strain ATCC BAA-2100 / JCM 16839 / KCTC 5957 / BAV1).